The following is a 142-amino-acid chain: 3-hydroxyacyl-[acyl-carrier-protein] dehydratase FabZ (142 aa).

Histidine 49 is a catalytic residue.

It belongs to the thioester dehydratase family. FabZ subfamily.

Its subcellular location is the cytoplasm. The enzyme catalyses a (3R)-hydroxyacyl-[ACP] = a (2E)-enoyl-[ACP] + H2O. In terms of biological role, involved in unsaturated fatty acids biosynthesis. Catalyzes the dehydration of short chain beta-hydroxyacyl-ACPs and long chain saturated and unsaturated beta-hydroxyacyl-ACPs. The chain is 3-hydroxyacyl-[acyl-carrier-protein] dehydratase FabZ from Clostridium novyi (strain NT).